The following is a 337-amino-acid chain: Trace amine-associated receptor 5 (337 aa).

Residues 1–34 are Extracellular-facing; it reads MRAVFIQGAEEHPAAFCYQVNGSCPRTVHTLGIQ. A glycan (N-linked (GlcNAc...) asparagine) is linked at asparagine 21. Intrachain disulfides connect cysteine 24–cysteine 188 and cysteine 99–cysteine 192. A helical transmembrane segment spans residues 35–55; sequence LVIYLACAAGMLIIVLGNLFV. The Cytoplasmic segment spans residues 56–70; the sequence is AFAVSYFKALHTPTN. A helical membrane pass occupies residues 71-91; the sequence is FLLLSLALADMFLGLLVLPLS. The Extracellular portion of the chain corresponds to 92-109; it reads TIRSVESCWFFGDFLCRL. A helical membrane pass occupies residues 110-130; that stretch reads HTYLDPLFCLTSIFHLCFISI. The Cytoplasmic segment spans residues 131-154; it reads DRHCAICDPLLYPSKFTVRVALRY. A helical membrane pass occupies residues 155-175; it reads ILAGWGVPAAYTSLFLYTDVV. The segment at 176-189 is extracellular Loop 2 (ECL2); it reads ETRLSQWLEEMPCV. The Extracellular segment spans residues 176-204; that stretch reads ETRLSQWLEEMPCVGSCQLLLNKFWGWLN. Residues 205–225 traverse the membrane as a helical segment; the sequence is FPLFFVPCLIMISLYVKIFVV. Over 226 to 253 the chain is Cytoplasmic; the sequence is ATRQAQQITTLSKNLAGAAKHDRKAAKT. A helical membrane pass occupies residues 254-274; sequence LGIAVGIYLLCWLPFTIDTMV. At 275 to 284 the chain is on the extracellular side; it reads DSLLHFITPP. Residues 285–307 form a helical membrane-spanning segment; that stretch reads LVFDIFIWFAYFNSACNPIIYVF. At 308–337 the chain is on the cytoplasmic side; that stretch reads SYQWFRKALKLTLSQKVFSPQTRTVDLYQE.

It belongs to the G-protein coupled receptor 1 family.

Its subcellular location is the cell membrane. Functionally, olfactory receptor specific for trimethylamine, a trace amine. Trimethylamine is a bacterial metabolite found in some animal odors. Trimethylamine-binding causes a conformation change that triggers signaling via G(s)-class of G alpha proteins (GNAL or GNAS). In Pan troglodytes (Chimpanzee), this protein is Trace amine-associated receptor 5 (TAAR5).